The following is a 241-amino-acid chain: Tetraspanin-1 (241 aa).

3 helical membrane passes run 12-32 (ILFNLLIFLCGAALLAVGIWV), 53-73 (FVNVGYFLIAAGAVLFILGFL), and 89-109 (FFSILLIIFIAEIAGAVVALV). The N-linked (GlcNAc...) asparagine glycan is linked to Asn-154. The chain crosses the membrane as a helical span at residues 212–232 (AVTVGGVAVGVAALELAAMVV).

This sequence belongs to the tetraspanin (TM4SF) family. Interacts with SLC19A2. Interacts with NTRK1/TRKA.

The protein localises to the cell membrane. Its subcellular location is the lysosome membrane. In terms of biological role, structural component of specialized membrane microdomains known as tetraspanin-enriched microdomains (TERMs), which act as platforms for receptor clustering and signaling. Participates thereby in diverse biological functions such as cell signal transduction, adhesion, migration and protein trafficking. Regulates neuronal differentiation in response to NGF by facilitating NGF-mediated activation of NTRK1/TRKA receptor tyrosine kinase and subsequent downstream signaling pathways. Plays a role in the inhibition of TNFalpha-induced apoptosis. Mechanistically, inhibits the NF-kappa-B signaling pathway by blocking phosphorylation of CHUK. Also promotes the stability of the thiamine transporter 1/SLC19A2 in intestinal epithelial cells leading to an increase of thiamine uptake process. This is Tetraspanin-1 (Tspan1) from Rattus norvegicus (Rat).